Consider the following 630-residue polypeptide: UvrABC system protein C (630 aa).

The disordered stretch occupies residues 1–96; that stretch reads MGAEGLQGEG…GEAHRRGGTG (96 aa). Residues 9 to 28 show a composition bias toward low complexity; it reads EGEVPPQGAGVPGQVQVGVH. Positions 52-125 constitute a GIY-YIG domain; sequence DPRGLPVEAG…IKAHRPLYNV (74 aa). Over residues 75–91 the composition is skewed to basic and acidic residues; the sequence is RPGEKLLPRRGQGEAHR. Positions 234–269 constitute a UVR domain; sequence DGLLQELEAKMREAARRLEFERAAEIRDQMEALRAF.

This sequence belongs to the UvrC family. In terms of assembly, interacts with UvrB in an incision complex.

The protein localises to the cytoplasm. Functionally, the UvrABC repair system catalyzes the recognition and processing of DNA lesions. UvrC both incises the 5' and 3' sides of the lesion. The N-terminal half is responsible for the 3' incision and the C-terminal half is responsible for the 5' incision. The protein is UvrABC system protein C of Thermus thermophilus (strain ATCC BAA-163 / DSM 7039 / HB27).